Reading from the N-terminus, the 159-residue chain is Riboflavin kinase (159 aa).

38 to 43 serves as a coordination point for CDP; that stretch reads GLGEGR. The Mg(2+) site is built by T67 and N69. FMN is bound by residues T126 and E134. 139–142 contacts CDP; it reads HKLR.

This sequence belongs to the archaeal riboflavin kinase family. It depends on Mg(2+) as a cofactor.

It catalyses the reaction riboflavin + CTP = CDP + FMN + H(+). It functions in the pathway cofactor biosynthesis; FMN biosynthesis; FMN from riboflavin (CTP route): step 1/1. Its function is as follows. Catalyzes the CTP-dependent phosphorylation of riboflavin (vitamin B2) to form flavin mononucleotide (FMN). The chain is Riboflavin kinase from Sulfolobus acidocaldarius (strain ATCC 33909 / DSM 639 / JCM 8929 / NBRC 15157 / NCIMB 11770).